The chain runs to 390 residues: GDSL esterase/lipase At1g28640 (390 aa).

Positions 1 to 26 are cleaved as a signal peptide; it reads MASSLEKLISSFLLVLYSTTIIVASS. The Nucleophile role is filled by Ser-42. Residues Asn-105, Asn-138, and Asn-321 are each glycosylated (N-linked (GlcNAc...) asparagine). Catalysis depends on residues Asp-346 and His-349. Asn-364 carries N-linked (GlcNAc...) asparagine glycosylation.

Belongs to the 'GDSL' lipolytic enzyme family.

The protein localises to the secreted. The protein is GDSL esterase/lipase At1g28640 of Arabidopsis thaliana (Mouse-ear cress).